The following is a 297-amino-acid chain: MAPSQLPPIFNPTPQDIEMLLAAQCHLGSKNLQVHMEPYLWKTRPDGVNVINIGKTWEKILLAARIIAAIENPADICVISARPYGQRAVLKFASHTGATAIAGRFTPGNFTNYITRSFKEPRLIIVTDPRTDAQAIKEASYVNIPVIALCDTDSPTEFVDVAIPTNNKGRHAIGLIWWLLAREVLRLRGTLATRETEWDVVVDLYFYRDPEAEENKEIADEAKVPGAEEIGAGAVESGFAGENWDTQAPGAGVPGTAFSAATAAPTSWEADGGDWAASSAAPAGESWAETQPAEAKW.

The interval 252–297 (GVPGTAFSAATAAPTSWEADGGDWAASSAAPAGESWAETQPAEAKW) is disordered. A compositionally biased stretch (low complexity) spans 256–289 (TAFSAATAAPTSWEADGGDWAASSAAPAGESWAE).

It belongs to the universal ribosomal protein uS2 family. In terms of assembly, component of the small ribosomal subunit. Mature ribosomes consist of a small (40S) and a large (60S) subunit. The 40S subunit contains about 33 different proteins and 1 molecule of RNA (18S). The 60S subunit contains about 49 different proteins and 3 molecules of RNA (25S, 5.8S and 5S). Interacts with rps21.

The protein localises to the cytoplasm. Its function is as follows. Required for the assembly and/or stability of the 40S ribosomal subunit. Required for the processing of the 20S rRNA-precursor to mature 18S rRNA in a late step of the maturation of 40S ribosomal subunits. This Aspergillus fumigatus (strain CBS 144.89 / FGSC A1163 / CEA10) (Neosartorya fumigata) protein is Small ribosomal subunit protein uS2 (rps0).